The following is a 111-amino-acid chain: Probable U2 small nuclear ribonucleoprotein B'' (111 aa).

Residues 4–83 enclose the RRM domain; it reads NTLYVNNLND…KEMKIQYAHS (80 aa).

As to quaternary structure, belongs to the 40S cdc5-associated complex (or cwf complex), a spliceosome sub-complex reminiscent of a late-stage spliceosome composed of the U2, U5 and U6 snRNAs and at least brr2, cdc5, cwf2/prp3, cwf3/syf1, cwf4/syf3, cwf5/ecm2, spp42/cwf6, cwf7/spf27, cwf8, cwf9, cwf10, cwf11, cwf12, prp45/cwf13, cwf14, cwf15, cwf16, cwf17, cwf18, cwf19, cwf20, cwf21, cwf22, cwf23, cwf24, cwf25, cwf26, cyp7/cwf27, cwf28, cwf29/ist3, lea1, msl1, prp5/cwf1, prp10, prp12/sap130, prp17, prp22, sap61, sap62, sap114, sap145, slu7, smb1, smd1, smd3, smf1, smg1 and syf2.

The protein resides in the nucleus. Involved in pre-mRNA splicing. This protein is associated with snRNP U2. It binds stem loop IV of U2 snRNA. This is Probable U2 small nuclear ribonucleoprotein B'' (msl1) from Schizosaccharomyces pombe (strain 972 / ATCC 24843) (Fission yeast).